Consider the following 393-residue polypeptide: NADH-quinone oxidoreductase subunit D (393 aa).

This sequence belongs to the complex I 49 kDa subunit family. NDH-1 is composed of 14 different subunits. Subunits NuoB, C, D, E, F, and G constitute the peripheral sector of the complex.

It localises to the cell inner membrane. The catalysed reaction is a quinone + NADH + 5 H(+)(in) = a quinol + NAD(+) + 4 H(+)(out). NDH-1 shuttles electrons from NADH, via FMN and iron-sulfur (Fe-S) centers, to quinones in the respiratory chain. The immediate electron acceptor for the enzyme in this species is believed to be ubiquinone. Couples the redox reaction to proton translocation (for every two electrons transferred, four hydrogen ions are translocated across the cytoplasmic membrane), and thus conserves the redox energy in a proton gradient. The protein is NADH-quinone oxidoreductase subunit D of Ehrlichia canis (strain Jake).